The sequence spans 386 residues: Patatin-2-Kuras 2 (386 aa).

Residues 1–23 form the signal peptide; sequence MATTKSFLILFFMILATTSSTCA. The PNPLA domain maps to 32–229; it reads LSIDGGGIKG…TVGDPALLSL (198 aa). A GXGXXG motif is present at residues 36 to 41; that stretch reads GGGIKG. Residues 75–79 carry the GXSXG motif; sequence GTSTG. Residue S77 is the Nucleophile of the active site. The N-linked (GlcNAc...) asparagine glycan is linked to N115. D215 (proton acceptor) is an active-site residue. The DGA/G signature appears at 215-217; sequence DGA. The stretch at 321–384 forms a coiled coil; the sequence is ENALTGTTTE…DRKKLRANKA (64 aa).

Belongs to the patatin family.

The protein resides in the vacuole. Probable lipolytic acyl hydrolase (LAH), an activity which is thought to be involved in the response of tubers to pathogens. In Solanum tuberosum (Potato), this protein is Patatin-2-Kuras 2 (pat2-k2).